Reading from the N-terminus, the 127-residue chain is Small ribosomal subunit protein uS11 (127 aa).

It belongs to the universal ribosomal protein uS11 family. As to quaternary structure, part of the 30S ribosomal subunit. Interacts with proteins S7 and S18. Binds to IF-3.

In terms of biological role, located on the platform of the 30S subunit, it bridges several disparate RNA helices of the 16S rRNA. Forms part of the Shine-Dalgarno cleft in the 70S ribosome. This Rickettsia africae (strain ESF-5) protein is Small ribosomal subunit protein uS11.